Reading from the N-terminus, the 840-residue chain is Protein translocase subunit SecA (840 aa).

ATP is bound by residues Q85, 103-107 (GEGKT), and D492. Residues 787–821 (QRERVAKETGASHGGDSQEIKKKPVKKEPKVGRND) form a disordered region. The span at 802–819 (DSQEIKKKPVKKEPKVGR) shows a compositional bias: basic and acidic residues. Residues C823, C825, C834, and C835 each contribute to the Zn(2+) site.

Belongs to the SecA family. In terms of assembly, monomer and homodimer. Part of the essential Sec protein translocation apparatus which comprises SecA, SecYEG and auxiliary proteins SecDF. Other proteins may also be involved. The cofactor is Zn(2+).

The protein resides in the cell membrane. It is found in the cytoplasm. It carries out the reaction ATP + H2O + cellular proteinSide 1 = ADP + phosphate + cellular proteinSide 2.. Part of the Sec protein translocase complex. Interacts with the SecYEG preprotein conducting channel. Has a central role in coupling the hydrolysis of ATP to the transfer of proteins into and across the cell membrane, serving as an ATP-driven molecular motor driving the stepwise translocation of polypeptide chains across the membrane. This chain is Protein translocase subunit SecA, found in Clostridium perfringens (strain SM101 / Type A).